The primary structure comprises 340 residues: MNQLIQAQKKLLPDLLLVMQKRFEILQYIRLTEPIGRRSLSASLGISERVLRGEVQFLKEQNLVDIKTNGMTLTEEGYELLSVLEDTMKDVLGLTLLEKTLKERLNLKDAIIVSGDSDQSPWVKKEMGRAAVACMKKRFSGKNIVAVTGGTTIEAVAEMMTPDSKNRELLFVPARGGLGEDVKNQANTICAHMAEKASGTYRLLFVPGQLSQGAYSSIIEEPSVKEVLNTIKSASMLVHGIGEAKTMAQRRNTPLEDLKKIDDNDAVTEAFGYYFNADGEVVHKVHSVGMQLDDIDAIPDIIAVAGGSSKAEAIEAYFKKPRNTVLVTDEGAAKKLLRDE.

The segment at residues 37–56 is a DNA-binding region (H-T-H motif); that stretch reads RRSLSASLGISERVLRGEVQ. Beta-D-fructose 1,6-bisphosphate-binding positions include 149-152, Arg-175, Gln-185, 250-251, Glu-269, and Lys-310; these read GGTT and RR.

The protein belongs to the SorC transcriptional regulatory family. In terms of assembly, homotetramer. Binds primarily as a dimer to each half-site of the full-length operator, with much higher affinity for the right site. Then, both dimers interact, bridging the two-half sites of the operator region.

Its activity is regulated as follows. Stability and function are regulated by the effector molecule fructose-1,6-bisphosphate (FBP). In the presence of glucose, binding of FBP to the low-affinity sugar-binding site of CggR disrupts dimer/dimer bridging interactions and triggers a tetramer to dimer transition, which leaves two physically independent dimers on the target DNA and allows transcription of the downstream coding sequences by the RNA polymerase. In addition, FBP and several other phosphorylated compounds can bind to a high-affinity binding-site and protect CggR against aggregation and proteolysis. Functionally, in the absence of glucose, represses the transcription of the gapA operon, which encodes five key glycolytic enzymes. Binds specifically to the cggR-gapA promoter region and blocks the progression of the RNA polymerase, leading to the arrest of the transcription. The chain is Central glycolytic genes regulator (cggR) from Bacillus subtilis (strain 168).